Consider the following 229-residue polypeptide: 1-Cys peroxiredoxin PER1 (229 aa).

The Thioredoxin domain occupies 4 to 173; the sequence is LTIGDTVPNL…VLRAVDSLLT (170 aa). Catalysis depends on cysteine 46, which acts as the Cysteine sulfenic acid (-SOH) intermediate. Residues 205-228 carry the Bipartite nuclear localization signal motif; it reads RKMFPQGFETADLPSKKGYLRFTK.

This sequence belongs to the peroxiredoxin family. Prx6 subfamily.

Its subcellular location is the nucleus. It localises to the cytoplasm. It catalyses the reaction a hydroperoxide + [thioredoxin]-dithiol = an alcohol + [thioredoxin]-disulfide + H2O. In terms of biological role, thiol-specific peroxidase that catalyzes the reduction of hydrogen peroxide and organic hydroperoxides to water and alcohols, respectively. Seems to contribute to the inhibition of germination during stress. This is 1-Cys peroxiredoxin PER1 (PER1) from Zea mays (Maize).